Reading from the N-terminus, the 198-residue chain is Recombination protein RecR (198 aa).

A C4-type zinc finger spans residues 57–72 (CEKCNTFTEAQICEVC). The region spanning 80 to 175 (TLLCVVETPA…AVTRLARGVP (96 aa)) is the Toprim domain.

It belongs to the RecR family.

In terms of biological role, may play a role in DNA repair. It seems to be involved in an RecBC-independent recombinational process of DNA repair. It may act with RecF and RecO. This is Recombination protein RecR from Burkholderia vietnamiensis (strain G4 / LMG 22486) (Burkholderia cepacia (strain R1808)).